Here is a 718-residue protein sequence, read N- to C-terminus: Pentatricopeptide repeat-containing protein At1g22960, mitochondrial (718 aa).

The transit peptide at 1-11 (MILCLRLCLRA) directs the protein to the mitochondrion. PPR repeat units follow at residues 167 to 201 (ALKL…GFLP), 202 to 236 (SVRN…GIMP), 237 to 271 (TVIT…NIEF), 272 to 306 (SEVT…GFAV), 307 to 341 (TPYS…GIYP), 342 to 372 (TTST…MAAP), 373 to 407 (DVVS…DIHP), 408 to 442 (SIVT…LIFP), 443 to 477 (DVIT…GIKP), 478 to 512 (DGYA…DHHA), 514 to 548 (DLTI…GLVP), 549 to 583 (DHVT…RLYP), 584 to 618 (SVIT…GVRP), 619 to 653 (NVMT…GIPP), and 654 to 688 (NKYS…EIEP).

It belongs to the PPR family. P subfamily.

The protein localises to the mitochondrion. This chain is Pentatricopeptide repeat-containing protein At1g22960, mitochondrial, found in Arabidopsis thaliana (Mouse-ear cress).